Here is a 195-residue protein sequence, read N- to C-terminus: MNGQLIIDRYMEELNAELANMPDVERENAIDELKGHITAFVQDRIKAGLSEEELQEAVESEFSHPKELAELMMGDGGETKRRRSLLGKSWISVLLIVTIIALPLLPSDFRHLPLAVYLMVLAGYVWKRKKLVMFAGVRKNKMRSQKEIVKISRVGAVYLLFLAVVLLLSPFLNALVVLLLIAVSCAAFFLFLNIK.

Helical transmembrane passes span 89–106, 111–128, 149–168, and 172–194; these read SWIS…PLLP, HLPL…VWKR, VKIS…VLLL, and LNAL…FLNI.

The protein resides in the cell membrane. This is an uncharacterized protein from Bacillus subtilis (strain 168).